A 154-amino-acid polypeptide reads, in one-letter code: MGLSDGEWQLVLNIWGKVEADIPSHGQEVLISLFKGHPETLEKFDKFKHLKSEDEMKASEELKKHGTTVLTALGGILKKKGQHEAELKPLAQSHATKHKIPVKYLELISDAIVHVLQKKHPGDFGADAQGAMKKALELFRNDMAAKYKELGFQG.

The region spanning 2–148 (GLSDGEWQLV…FRNDMAAKYK (147 aa)) is the Globin domain. At serine 4 the chain carries Phosphoserine. Histidine 65 is a nitrite binding site. Histidine 65 contributes to the O2 binding site. A Phosphothreonine modification is found at threonine 68. Histidine 94 provides a ligand contact to heme b.

It belongs to the globin family. In terms of assembly, monomeric.

The protein resides in the cytoplasm. It is found in the sarcoplasm. It catalyses the reaction Fe(III)-heme b-[protein] + nitric oxide + H2O = Fe(II)-heme b-[protein] + nitrite + 2 H(+). The enzyme catalyses H2O2 + AH2 = A + 2 H2O. Its function is as follows. Monomeric heme protein which primary function is to store oxygen and facilitate its diffusion within muscle tissues. Reversibly binds oxygen through a pentacoordinated heme iron and enables its timely and efficient release as needed during periods of heightened demand. Depending on the oxidative conditions of tissues and cells, and in addition to its ability to bind oxygen, it also has a nitrite reductase activity whereby it regulates the production of bioactive nitric oxide. Under stress conditions, like hypoxia and anoxia, it also protects cells against reactive oxygen species thanks to its pseudoperoxidase activity. This chain is Myoglobin (MB), found in Saimiri sciureus (Common squirrel monkey).